We begin with the raw amino-acid sequence, 254 residues long: Serotonin N-acetyltransferase 1, chloroplastic (254 aa).

The transit peptide at 1 to 83 (MASAASASAS…NSTETVEPPS (83 aa)) directs the protein to the chloroplast. One can recognise an N-acetyltransferase domain in the interval 119–254 (VNVYDLQALC…IKGMFWYPRF (136 aa)).

The protein resides in the plastid. It localises to the chloroplast. It is found in the nucleus. It carries out the reaction a 2-arylethylamine + acetyl-CoA = an N-acetyl-2-arylethylamine + CoA + H(+). The protein operates within aromatic compound metabolism; melatonin biosynthesis; melatonin from serotonin: step 1/2. Functionally, catalyzes the N-acetylation of serotonin into N-acetylserotonin, the penultimate step in the synthesis of melatonin. Catalyzes in vitro the N-acetylation of tryptamine to produce N-acetyltryptamine, 5-methoxytryptamine to produce melatonin and tyramine to produce N-acetyltyramine. Acetyltransferase required for geminivirus infection and systemic spread. The polypeptide is Serotonin N-acetyltransferase 1, chloroplastic (Oryza sativa subsp. indica (Rice)).